Here is a 518-residue protein sequence, read N- to C-terminus: MPNIDLPTLEAFVHAIPQNYKGPGGAVAVVRNGEIVLRHAWGFADLAARKAMTPETRMPICSVSKQFTCAVLLDCIGEPEMLDSALAAYLDQFEDGRPAVRDLCNNQSGLRDYWALTVLCGAAPEGIFLPDQAQNLLRRLKTTHFAPGTHYSYCNGNFRILADLIEQHTGRSLADLLAERIFAPAAMKTAELIPDTALFNECTGYEGDTVRGFLPAINRIHWLGDAGICASLDDMIAWEQFIDRTRHDENGLYRRLSSPQTFADGAPAPYGFGLKFEETGGKRLTGHGGALRGWRCQRWHCADERISTIVMFNFEGNASDAALKMMNAALGIPPAKPVRAQANPGWFGSWLNPETGLVLSLEDAGGGRMKARFGTGPEIMDISGENEAQSSMTTLRRDGDMIHLARKDENLHLAMHRLKGEARQDIAGRYRSDELEADLLLVSEGGAIYGAFEGFLGKSDMYPLYAAGPDVWLLPVQRSMDAPSPGEWKLVFHRDAAGRITGVTVGCWLARGVEYKRL.

The active-site Nucleophile is the serine 62. Lysine 65 acts as the Proton donor/acceptor in catalysis. The important for specificity stretch occupies residues 477–487; sequence QRSMDAPSPGE. Substrate is bound at residue aspartate 481.

Belongs to the peptidase S12 family. In terms of assembly, homodimer.

It catalyses the reaction Release of an N-terminal D-amino acid from a peptide, Xaa-|-Yaa-, in which Xaa is preferably D-Ala, D-Ser or D-Thr. D-amino acid amides and methyl esters also are hydrolyzed, as is glycine amide.. With respect to regulation, inhibited by beta-lactam compounds such as 6-aminopenicillic acid, 7-aminocephalosporanic acid, benzylpenicillin and ampicillin. Inhibited by p-chloromercuribenzoate. Its function is as follows. Hydrolyzes N-terminal residues in D-amino acid-containing peptides. This chain is D-aminopeptidase, found in Brucella abortus (strain S19).